The chain runs to 244 residues: 7-cyano-7-deazaguanine synthase (244 aa).

An ATP-binding site is contributed by 17-27; it reads FSGGQDSTTCL. Zn(2+) is bound by residues C205, C220, C223, and C226.

This sequence belongs to the QueC family. Requires Zn(2+) as cofactor.

It carries out the reaction 7-carboxy-7-deazaguanine + NH4(+) + ATP = 7-cyano-7-deazaguanine + ADP + phosphate + H2O + H(+). It functions in the pathway purine metabolism; 7-cyano-7-deazaguanine biosynthesis. Functionally, catalyzes the ATP-dependent conversion of 7-carboxy-7-deazaguanine (CDG) to 7-cyano-7-deazaguanine (preQ(0)). This chain is 7-cyano-7-deazaguanine synthase, found in Bordetella pertussis (strain Tohama I / ATCC BAA-589 / NCTC 13251).